The chain runs to 242 residues: ATP synthase subunit a (242 aa).

The next 5 helical transmembrane spans lie at 21 to 41, 79 to 99, 116 to 136, 173 to 193, and 198 to 218; these read LSSIMMLIITAVIVFVIAIIC, FHFLAVTLIFFIFVSNMLGLP, DATVTLTLSTLIILLTHFYGV, LYGNIFAGELLLGLLAGLVTG, and AWGWIIGLPGLVVWQGFSIFI.

The protein belongs to the ATPase A chain family. F-type ATPases have 2 components, CF(1) - the catalytic core - and CF(0) - the membrane proton channel. CF(1) has five subunits: alpha(3), beta(3), gamma(1), delta(1), epsilon(1). CF(0) has three main subunits: a(1), b(2) and c(9-12). The alpha and beta chains form an alternating ring which encloses part of the gamma chain. CF(1) is attached to CF(0) by a central stalk formed by the gamma and epsilon chains, while a peripheral stalk is formed by the delta and b chains.

It is found in the cell membrane. Key component of the proton channel; it plays a direct role in the translocation of protons across the membrane. The sequence is that of ATP synthase subunit a from Staphylococcus saprophyticus subsp. saprophyticus (strain ATCC 15305 / DSM 20229 / NCIMB 8711 / NCTC 7292 / S-41).